Consider the following 298-residue polypeptide: uncharacterized protein (298 aa).

The tract at residues 264-298 (APPPPLPCITTGPAALEDSPKASKANKGKKAKAKK) is disordered. The span at 287-298 (KANKGKKAKAKK) shows a compositional bias: basic residues.

This is an uncharacterized protein from Mus musculus (Mouse).